Here is a 69-residue protein sequence, read N- to C-terminus: U2-agatoxin-Ao1e (69 aa).

The signal sequence occupies residues 1–20 (MRAIISVLLISAMVFSIIEA). The propeptide occupies 21–34 (VPLEEGLQLFEAER). 3 disulfides stabilise this stretch: Cys37–Cys53, Cys44–Cys58, and Cys52–Cys68.

It belongs to the neurotoxin 01 (U2-agtx) family. As to expression, expressed by the venom gland.

It is found in the secreted. Functionally, insect active toxin causing rapid but reversible paralysis in crickets. No activity shown in mammals. Does not show effect on mammalian voltage-gated calcium channels. In Agelena orientalis (Funnel-web spider), this protein is U2-agatoxin-Ao1e.